A 326-amino-acid chain; its full sequence is tRNA-modifying protein YgfZ (326 aa).

Folate-binding residues include Trp27 and Trp189.

Belongs to the tRNA-modifying YgfZ family.

The protein localises to the cytoplasm. Functionally, folate-binding protein involved in regulating the level of ATP-DnaA and in the modification of some tRNAs. It is probably a key factor in regulatory networks that act via tRNA modification, such as initiation of chromosomal replication. This is tRNA-modifying protein YgfZ from Shigella boydii serotype 18 (strain CDC 3083-94 / BS512).